Reading from the N-terminus, the 433-residue chain is Trigger factor (433 aa).

The PPIase FKBP-type domain occupies 165-250; the sequence is GDSAIIDFEG…LHNIQEKVKV (86 aa).

Belongs to the FKBP-type PPIase family. Tig subfamily.

It is found in the cytoplasm. The enzyme catalyses [protein]-peptidylproline (omega=180) = [protein]-peptidylproline (omega=0). In terms of biological role, involved in protein export. Acts as a chaperone by maintaining the newly synthesized protein in an open conformation. Functions as a peptidyl-prolyl cis-trans isomerase. The chain is Trigger factor from Sulfurimonas denitrificans (strain ATCC 33889 / DSM 1251) (Thiomicrospira denitrificans (strain ATCC 33889 / DSM 1251)).